Here is an 853-residue protein sequence, read N- to C-terminus: Mitochondrial 15S rRNA processing factor CCM1 (853 aa).

Residues 1 to 25 (MLSLGKNGKTSSTLVRNARRSVIMP) constitute a mitochondrion transit peptide. 2 PPR repeats span residues 310-344 (NRKNYTTVISFYTKMEHYKKAWQLFDSLKFLSLEH) and 347-381 (DTKVYNLMLEVCQKEKNYARSLDIFQEMDDLNVTK).

This sequence belongs to the CCM1 family. Binds to mitochondrial small subunit 15S rRNA.

The protein localises to the mitochondrion. Regulates mitochondrial small subunit maturation by controlling 15S rRNA 5'-end processing. Localizes to the 5' precursor of the 15S rRNA in a position that is subsequently occupied by mS47 in the mature yeast mtSSU. Uses structure and sequence-specific RNA recognition, binding to a single-stranded region of the precursor and specifically recognizing bases -6 to -1. The exchange of Ccm1 for mS47 is coupled to the irreversible removal of precursor rRNA that is accompanied by conformational changes of the mitoribosomal proteins uS5m and mS26. These conformational changes signal completion of 5'-end rRNA processing through protection of the mature 5'-end of the 15S rRNA and stabilization of mS47. The removal of the 5' precursor together with the dissociation of Ccm1 may be catalyzed by the 5'-3' exoribonuclease Pet127. Involved in the specific removal of group I introns in mitochondrial encoded transcripts. The polypeptide is Mitochondrial 15S rRNA processing factor CCM1 (CCM1) (Kluyveromyces lactis (strain ATCC 8585 / CBS 2359 / DSM 70799 / NBRC 1267 / NRRL Y-1140 / WM37) (Yeast)).